The following is a 119-amino-acid chain: Large ribosomal subunit protein uL22 (119 aa).

The protein belongs to the universal ribosomal protein uL22 family. In terms of assembly, part of the 50S ribosomal subunit.

This protein binds specifically to 23S rRNA; its binding is stimulated by other ribosomal proteins, e.g. L4, L17, and L20. It is important during the early stages of 50S assembly. It makes multiple contacts with different domains of the 23S rRNA in the assembled 50S subunit and ribosome. In terms of biological role, the globular domain of the protein is located near the polypeptide exit tunnel on the outside of the subunit, while an extended beta-hairpin is found that lines the wall of the exit tunnel in the center of the 70S ribosome. This chain is Large ribosomal subunit protein uL22, found in Trichormus variabilis (strain ATCC 29413 / PCC 7937) (Anabaena variabilis).